Here is a 113-residue protein sequence, read N- to C-terminus: U11-theraphotoxin-Hhn1a (113 aa).

Residues 1-21 (MNTVRVTFLLVFVLAVSLGQA) form the signal peptide. A propeptide spanning residues 22–74 (DKDENRMEMQEKTEQGKSYLDFAENLLLQKLEELEAKLLEEDSEESRNSRQKR) is cleaved from the precursor. Residues 61–83 (EEDSEESRNSRQKRCIGEGVPCD) form a disordered region. 3 disulfide bridges follow: Cys-75-Cys-90, Cys-82-Cys-95, and Cys-89-Cys-110.

Belongs to the neurotoxin 14 (magi-1) family. 01 (HNTX-16) subfamily. As to expression, expressed by the venom gland.

It is found in the secreted. Its function is as follows. Probable ion channel inhibitor. The polypeptide is U11-theraphotoxin-Hhn1a (Cyriopagopus hainanus (Chinese bird spider)).